A 363-amino-acid chain; its full sequence is MSISGIIAEYNPFHTGHKYLLEQAEGLKIVVMSGNFMQRGEPAIVDKWTRAQMALEHGADLVVEMPFLVSVQSADHFAKGAISILHRLGVEKLVFGTEEMLDYQKIADIYVDKSEEMENFVKNLPDNFSYPQKTQAMWQEFAGLTFTGDTPNHILALAYAKGVAGTGIQLSPVQRQGAGFHSEEVETSYASAIAIRKGADQLDLVRDFLPSASLFEEATKVSWRNYFPLLRYQITTHPDLSQVFQVNEELASRIRSAIGSVATVEELVEAVTTKRYTKARVRRVLTYILINAVETPLPDAVHVLGFSARGQAYLKQVKERVGLVTRIGKEPWDSLTQQADLVYQLGADAMAEQTYGRVPVRVE.

Residues 7–20 (IAEY…HKYL), glycine 96, asparagine 152, and arginine 175 each bind ATP.

Belongs to the TmcAL family.

The protein localises to the cytoplasm. The enzyme catalyses cytidine(34) in elongator tRNA(Met) + acetate + ATP = N(4)-acetylcytidine(34) in elongator tRNA(Met) + AMP + diphosphate. Functionally, catalyzes the formation of N(4)-acetylcytidine (ac(4)C) at the wobble position of elongator tRNA(Met), using acetate and ATP as substrates. First activates an acetate ion to form acetyladenylate (Ac-AMP) and then transfers the acetyl group to tRNA to form ac(4)C34. The protein is tRNA(Met) cytidine acetate ligase of Streptococcus suis (strain 98HAH33).